Consider the following 95-residue polypeptide: Small ribosomal subunit protein uS17 (95 aa).

Belongs to the universal ribosomal protein uS17 family. Part of the 30S ribosomal subunit.

One of the primary rRNA binding proteins, it binds specifically to the 5'-end of 16S ribosomal RNA. The sequence is that of Small ribosomal subunit protein uS17 from Mycoplasmopsis synoviae (strain 53) (Mycoplasma synoviae).